The primary structure comprises 254 residues: MAYVSMKQMLETGVHFGHQTRRWNPKMRPFIFGARNGIHIIDLQQTVKMFRVAHDKVVDTVANGGRVMFIGTKRQAQEAVATEAGRAGQFYVTNRWMGGTLTNFFTIQKSIDRLKKLEAMFADGTVNRYQKKEILRLQREMDKLLATLGGIKDMDKLPQLAFVIDPHREDIAIKECRKLGIPIVAVTDTNCDPDLIDFVIPGNDDAIRAIKLFVAAIADACLEGDALRKERKGQDAEEELKKASEPKAAEAAAE.

Residues Arg-228–Ala-248 show a composition bias toward basic and acidic residues. A disordered region spans residues Arg-228–Glu-254.

This sequence belongs to the universal ribosomal protein uS2 family.

This is Small ribosomal subunit protein uS2 from Nitratidesulfovibrio vulgaris (strain ATCC 29579 / DSM 644 / CCUG 34227 / NCIMB 8303 / VKM B-1760 / Hildenborough) (Desulfovibrio vulgaris).